An 874-amino-acid chain; its full sequence is Speckle targeted PIP5K1A-regulated poly(A) polymerase (874 aa).

A Matrin-type zinc finger spans residues 16-46 (FRCCLCHVTTANRPSLDAHLGGRKHRHLVEL). Residues 56-128 (RSVFVSGFPR…HRLRVRPREQ (73 aa)) enclose the RRM domain. The tract at residues 113–146 (QHSLGGHRLRVRPREQKEFQSPASKSPKGAAPDS) is disordered. Residue Ser205 participates in ATP binding. Mg(2+)-binding residues include Asp216 and Asp218. Positions 216 and 218 each coordinate UTP. Residues 252–334 (QALACTPASP…ELAETPKEEK (83 aa)) form a disordered region. Residues 259–269 (ASPPDSQPPAS) are compositionally biased toward pro residues. Residues 280 to 291 (TPSSSLAPQTPD) show a composition bias toward polar residues. An ATP-binding site is contributed by Asn392. Asn392, Arg414, Tyr432, and His549 together coordinate UTP. Residues 491–549 (LSSLLAQFFSCVSCWDLRGSLLSLREGQALPVAGGLPSNLWEGLRLGPLNLQDPFDLSH) enclose the PAP-associated domain. The segment at 598-874 (SSPSSLLSAT…FLPQAIRHLK (277 aa)) is KA1; binds the bulging loops of U6 snRNA but is dispensable for terminal uridylyltransferase activity. 2 disordered regions span residues 638 to 662 (ATKR…KRLK) and 705 to 761 (MQSP…ASLP). Phosphoserine is present on Ser750.

Belongs to the DNA polymerase type-B-like family. Associates with the cleavage and polyadenylation specificity factor (CPSF) complex. Interacts with CPSF1 and CPSF3; the interaction is direct. Interacts with PIP5K1A. Requires Mg(2+) as cofactor. The cofactor is Mn(2+). In terms of processing, phosphorylated by CK1 in the proline-rich (Pro-rich) region. In terms of tissue distribution, widely expressed.

It is found in the nucleus. The protein resides in the nucleolus. Its subcellular location is the nucleus speckle. It carries out the reaction RNA(n) + UTP = RNA(n)-3'-uridine ribonucleotide + diphosphate. It catalyses the reaction RNA(n) + ATP = RNA(n)-3'-adenine ribonucleotide + diphosphate. Adenylyltransferase activity is specifically phosphatidylinositol 4,5-bisphosphate (PtdIns(4,5)P2). In terms of biological role, poly(A) polymerase that creates the 3'-poly(A) tail of specific pre-mRNAs. Localizes to nuclear speckles together with PIP5K1A and mediates polyadenylation of a select set of mRNAs, such as HMOX1. In addition to polyadenylation, it is also required for the 3'-end cleavage of pre-mRNAs: binds to the 3'UTR of targeted pre-mRNAs and promotes the recruitment and assembly of the CPSF complex on the 3'UTR of pre-mRNAs. In addition to adenylyltransferase activity, also has uridylyltransferase activity. However, the ATP ratio is higher than UTP in cells, suggesting that it functions primarily as a poly(A) polymerase. Acts as a specific terminal uridylyltransferase for U6 snRNA in vitro: responsible for a controlled elongation reaction that results in the restoration of the four 3'-terminal UMP-residues found in newly transcribed U6 snRNA. Not involved in replication-dependent histone mRNA degradation. The polypeptide is Speckle targeted PIP5K1A-regulated poly(A) polymerase (TUT1) (Homo sapiens (Human)).